A 164-amino-acid chain; its full sequence is MSQSICSTGLRWLWLVVVVLIIDLGSKYLILQNFALGDTVPLFPSLNLHYARNYGAAFSFLADSGGWQRWFFAGIAIGISVILAVMMYRSKATQKLNNIAYALIIGGALGNLFDRLWHGFVVDMIDFYVGDWHFATFNLADTAICVGAALIVLEGFLPSRAKKQ.

3 helical membrane-spanning segments follow: residues 12–32, 70–90, and 102–122; these read WLWLVVVVLIIDLGSKYLILQ, WFFAGIAIGISVILAVMMYRS, and ALIIGGALGNLFDRLWHGFVV. Active-site residues include aspartate 123 and aspartate 141. Residues 137-157 traverse the membrane as a helical segment; sequence FNLADTAICVGAALIVLEGFL.

The protein belongs to the peptidase A8 family.

It localises to the cell inner membrane. It catalyses the reaction Release of signal peptides from bacterial membrane prolipoproteins. Hydrolyzes -Xaa-Yaa-Zaa-|-(S,diacylglyceryl)Cys-, in which Xaa is hydrophobic (preferably Leu), and Yaa (Ala or Ser) and Zaa (Gly or Ala) have small, neutral side chains.. It participates in protein modification; lipoprotein biosynthesis (signal peptide cleavage). Its function is as follows. This protein specifically catalyzes the removal of signal peptides from prolipoproteins. This is Lipoprotein signal peptidase from Shigella sonnei (strain Ss046).